The following is a 322-amino-acid chain: L-asparaginase (322 aa).

Residues 3 to 322 enclose the Asparaginase/glutaminase domain; that stretch reads KKVALITTGG…KEGIKDKFCY (320 aa). The active-site O-isoaspartyl threonine intermediate is the Thr13. Residues Ser56 and 89–90 contribute to the substrate site; that span reads TD.

Belongs to the asparaginase 1 family. As to quaternary structure, homotetramer.

The protein localises to the cytoplasm. The catalysed reaction is L-asparagine + H2O = L-aspartate + NH4(+). In Bacillus licheniformis, this protein is L-asparaginase (ansA).